A 45-amino-acid chain; its full sequence is Putative metallothionein-like protein 1B (45 aa).

The protein belongs to the metallothionein superfamily. Type 15 family.

In terms of biological role, metallothioneins have a high content of cysteine residues that bind various heavy metals. Confers tolerance to cadmium (Cd) and plays a role in Cd and zinc (Zn) homeostasis. The polypeptide is Putative metallothionein-like protein 1B (MT1B) (Arabidopsis thaliana (Mouse-ear cress)).